We begin with the raw amino-acid sequence, 111 residues long: Small ribosomal subunit protein uS10 (111 aa).

This sequence belongs to the universal ribosomal protein uS10 family. Part of the 30S ribosomal subunit.

Its function is as follows. Involved in the binding of tRNA to the ribosomes. The sequence is that of Small ribosomal subunit protein uS10 from Ehrlichia ruminantium (strain Welgevonden).